The sequence spans 554 residues: Wee1-like protein kinase 2-B (554 aa).

Disordered stretches follow at residues 1-86 (MRMA…GGEC) and 145-182 (TLVN…DSQM). A Phosphoserine modification is found at S38. Polar residues-rich tracts occupy residues 38 to 48 (SPVSSWRTNNC) and 147 to 163 (VNVN…THFQ). Residues 213–487 (FLEIEKIGAG…AKNSVLRRCV (275 aa)) enclose the Protein kinase domain. Residues 219–227 (IGAGEFGSV) and K242 each bind ATP. Residue D340 is the Proton acceptor of the active site. Mg(2+)-binding residues include N345 and D377. Residues 490 to 516 (AAELQKQLNVEKFKTAMLERELQAAKL) adopt a coiled-coil conformation.

It belongs to the protein kinase superfamily. Ser/Thr protein kinase family. WEE1 subfamily. Interacts with cdca3. In terms of processing, ubiquitinated and degraded at the onset of G2/M phase. Phosphorylated during M and G1 phases. Interacts with cdca3 when phosphorylated at Ser-38.

It localises to the nucleus. The catalysed reaction is L-tyrosyl-[protein] + ATP = O-phospho-L-tyrosyl-[protein] + ADP + H(+). Functionally, oocyte and early embryo-specific protein tyrosine kinase that phosphorylates and inhibits cdk1 and acts as a regulator of meiosis in oocytes. Required to ensure the meiotic cell cycle in oocytes by phosphorylating cdk1 at 'Tyr-15', leading to inhibit cdk1 activity and prevent meiosis. This chain is Wee1-like protein kinase 2-B (wee2-b), found in Xenopus laevis (African clawed frog).